The sequence spans 121 residues: Pro-glucagon (121 aa).

Positions 1-21 (MKGAQYLAGLLLLLFVQNSIC) are cleaved as a signal peptide. Residues 80–85 (SNGGSA) constitute a propeptide that is removed on maturation.

The protein belongs to the glucagon family.

It is found in the secreted. Its function is as follows. Plays a key role in glucose metabolism and homeostasis. Regulates blood glucose by increasing gluconeogenesis and decreasing glycolysis. This is Pro-glucagon (gcg) from Carassius auratus (Goldfish).